Reading from the N-terminus, the 696-residue chain is Translation factor waclaw, mitochondrial (696 aa).

A mitochondrion-targeting transit peptide spans 1–76 (MIVGYSVFFH…RNLSTTNQVK (76 aa)). In terms of domain architecture, tr-type G spans 97-278 (ERIRNFSIIA…RVIETVPPPQ (182 aa)). Residues 106-113 (AHVDHGKS), 171-175 (DTPGH), and 225-228 (NKID) each bind GTP.

This sequence belongs to the TRAFAC class translation factor GTPase superfamily. Classic translation factor GTPase family. LepA subfamily.

The protein localises to the mitochondrion inner membrane. It catalyses the reaction GTP + H2O = GDP + phosphate + H(+). Functionally, promotes mitochondrial protein synthesis. May act as a fidelity factor of the translation reaction, by catalyzing a one-codon backward translocation of tRNAs on improperly translocated ribosomes. Binds to mitochondrial ribosomes in a GTP-dependent manner. The protein is Translation factor waclaw, mitochondrial of Drosophila melanogaster (Fruit fly).